Consider the following 85-residue polypeptide: Cell division topological specificity factor (85 aa).

It belongs to the MinE family.

In terms of biological role, prevents the cell division inhibition by proteins MinC and MinD at internal division sites while permitting inhibition at polar sites. This ensures cell division at the proper site by restricting the formation of a division septum at the midpoint of the long axis of the cell. This is Cell division topological specificity factor from Shewanella baltica (strain OS223).